The primary structure comprises 577 residues: Nuclear fusion protein tht1 (577 aa).

The first 29 residues, M1–G29, serve as a signal peptide directing secretion. Residues D30–N404 lie on the Lumenal side of the membrane. N163 and N372 each carry an N-linked (GlcNAc...) asparagine glycan. Residues I405–F425 traverse the membrane as a helical segment. At K426–R433 the chain is on the cytoplasmic side. A helical membrane pass occupies residues P434–T454. The Lumenal portion of the chain corresponds to S455–T470. The helical transmembrane segment at L471–L491 threads the bilayer. The Cytoplasmic segment spans residues N492–D577.

The protein belongs to the KAR5 family. Post-translationally, N-glycosylated.

It localises to the endoplasmic reticulum membrane. Its subcellular location is the nucleus membrane. Required for nuclear membrane fusion during karyogamy. This Schizosaccharomyces pombe (strain 972 / ATCC 24843) (Fission yeast) protein is Nuclear fusion protein tht1 (tht1).